A 384-amino-acid polypeptide reads, in one-letter code: MAEQTYSWAYSLVDSSQVSTFLISILLIVYGSFRSLNMDFENQDKEKDSNSSSGSFNGNSTNNSIQTIDSTQALFLPIGASVSLLVMFFFFDSVQVVFTICTAVLATIAFAFLLLPMCQYLTRPCSPQNKISFGCCGRFTAAELLSFSLSVMLVLIWVLTGHWLLMDALAMGLCVAMIAFVRLPSLKVSCLLLSGLLIYDVFWVFFSAYIFNSNVMVKVATQPADNPLDVLSRKLHLGPNVGRDVPRLSLPGKLVFPSSTGSHFSMLGIGDIVMPGLLLCFVLRYDNYKKQASGDSCGAPGPANISGRMQKVSYFHCTLIGYFVGLLTATVASRIHRAAQPALLYLVPFTLLPLLTMAYLKGDLRRMWSEPFHSKSSSSRFLEV.

The Lumenal portion of the chain corresponds to 1–8 (MAEQTYSW). The chain crosses the membrane as a helical span at residues 9–29 (AYSLVDSSQVSTFLISILLIV). Topologically, residues 30 to 73 (YGSFRSLNMDFENQDKEKDSNSSSGSFNGNSTNNSIQTIDSTQA) are cytoplasmic. A helical transmembrane segment spans residues 74-94 (LFLPIGASVSLLVMFFFFDSV). Residue Gln95 is a topological domain, lumenal. Residues 96-116 (VVFTICTAVLATIAFAFLLLP) form a helical membrane-spanning segment. Residues 117–138 (MCQYLTRPCSPQNKISFGCCGR) are Cytoplasmic-facing. The chain crosses the membrane as a helical span at residues 139 to 159 (FTAAELLSFSLSVMLVLIWVL). The Lumenal segment spans residues 160-164 (TGHWL). Residues 165-185 (LMDALAMGLCVAMIAFVRLPS) form a helical membrane-spanning segment. Over 186–190 (LKVSC) the chain is Cytoplasmic. A helical transmembrane segment spans residues 191-211 (LLLSGLLIYDVFWVFFSAYIF). Asp200 is an active-site residue. The Lumenal segment spans residues 212-262 (NSNVMVKVATQPADNPLDVLSRKLHLGPNVGRDVPRLSLPGKLVFPSSTGS). Residues 263–283 (HFSMLGIGDIVMPGLLLCFVL) form a helical membrane-spanning segment. Asp271 is an active-site residue. Over 284 to 311 (RYDNYKKQASGDSCGAPGPANISGRMQK) the chain is Cytoplasmic. A helical transmembrane segment spans residues 312–332 (VSYFHCTLIGYFVGLLTATVA). The Lumenal segment spans residues 333-339 (SRIHRAA). A helical membrane pass occupies residues 340-360 (QPALLYLVPFTLLPLLTMAYL). A PAL motif is present at residues 341-343 (PAL). Residues 361–384 (KGDLRRMWSEPFHSKSSSSRFLEV) are Cytoplasmic-facing.

It belongs to the peptidase A22B family. In terms of assembly, monomer. Homodimer. Interacts with STIM1 (via transmembrane region and SOAR/CAD domain); the interaction promotes the binding of STIM1 to ORAI1. In terms of processing, not glycosylated.

The protein localises to the endoplasmic reticulum membrane. It is found in the golgi apparatus. Its subcellular location is the membrane. With respect to regulation, its proteolytic activity is blocked by a signal peptide peptidase (SPP) inhibitor, (ZLL)2-ketone (ZLL) or a gamma-secretase inhibitor, LY411,575. Functionally, intramembrane-cleaving aspartic protease (I-CLiP) that cleaves type II membrane protein substrates in or close to their luminal transmembrane domain boundaries. Acts like a sheddase by mediating the proteolytic release and secretion of active site-containing ectodomains of glycan-modifiying glycosidase and glycosyltransferase enzymes such as MGAT5, B4GAT1 and B4GALT1. Plays a role in the regulation of cellular glycosylation processes. Required to link T-cell antigen receptor (TCR) and calcineurin-NFAT signaling cascades in lymphocytes by promoting the association of STIM1 and ORAI1 during store-operated calcium entry (SOCE) in a protease-independent manner. This chain is Signal peptide peptidase-like 3, found in Mus musculus (Mouse).